We begin with the raw amino-acid sequence, 515 residues long: MAEQVALSRTQVCGILREELYQGDAFHQSDTHIFIIMGASGDLAKKKIYPTIWWLFRDGLLPEDTFIVGYARSNLTVDDIRKQSEPYFKATPEENLKLEEFFSRNSYVAGQYDEPASFQRLNAHMNSLHHGSQANRLFYLALPPTVYEAVTKNIKETCMSQIGWNRVIVEKPFGKDLQSSDKLSNHISSLFHEDQIYRIDHYLGKEMVQNLMVLRFGNRIFGPIWNRDNIACVIFTFKEPFGTLGRGGYFDEFGIIRDVMQNHLLQMLCLVAMEKPASTNSDDVRDEKVKVLKCISEVRATDVVLGQYVGNPDGEGEATKGYLDDPTVPRGSTTATFAAVVLYVENERWDGVPFILRCGKALNERKAEVRLQFRDVAGDIFQRQCKRNELVIRVQPNEAVYTKMMTKKPGMFFNPEESELDLTYGNRYKDVKLPDAYERLILDVFCGSQMHFVRSDELREAWRIFTPLLHHIEKEKTQPIAYVYGSRGPPEADELMKRVGFQYEGTYKWVNPHKL.

Position 2 is an N-acetylalanine (alanine 2). Serine 8 carries the phosphoserine modification. Position 10 is a phosphothreonine (threonine 10). Residues 38–45 (GASGDLAK) and arginine 72 contribute to the NADP(+) site. The residue at position 89 (lysine 89) is an N6-acetyllysine. Positions 147 and 171 each coordinate NADP(+). D-glucose 6-phosphate-binding positions include lysine 171, 201–205 (HYLGK), glutamate 239, and aspartate 258. Lysine 171 carries the N6-(2-hydroxyisobutyryl)lysine; alternate modification. Lysine 171 bears the N6-acetyllysine; alternate mark. The Proton acceptor role is filled by histidine 263. Position 357 (arginine 357) interacts with NADP(+). Residues lysine 360 and arginine 365 each contribute to the D-glucose 6-phosphate site. Lysine 366, arginine 370, and arginine 393 together coordinate NADP(+). Glutamine 395 contacts D-glucose 6-phosphate. Residues 401–403 (YTK) and 421–423 (DLT) contribute to the NADP(+) site. Lysine 403 bears the N6-acetyllysine mark. Lysine 432 is subject to N6-acetyllysine. NADP(+) is bound at residue arginine 487. The residue at position 497 (lysine 497) is an N6-acetyllysine. Tyrosine 503 and tryptophan 509 together coordinate NADP(+). Tyrosine 503 is subject to Phosphotyrosine.

The protein belongs to the glucose-6-phosphate dehydrogenase family. Homotetramer; dimer of dimers. Interacts with SIRT2; the interaction is enhanced by H(2)O(2) treatment. Forms a ternary complex with ALDOB and TP53; this interaction is direct. ALDOB stabilizes the complex inhibiting G6PD activity and keeping oxidative pentose phosphate metabolism in check. In terms of processing, acetylated by ELP3 at Lys-403; acetylation inhibits its homodimerization and enzyme activity. Deacetylated by SIRT2 at Lys-403; deacetylation stimulates its enzyme activity.

Its subcellular location is the cytoplasm. It is found in the cytosol. It localises to the membrane. It carries out the reaction D-glucose 6-phosphate + NADP(+) = 6-phospho-D-glucono-1,5-lactone + NADPH + H(+). It participates in carbohydrate degradation; pentose phosphate pathway; D-ribulose 5-phosphate from D-glucose 6-phosphate (oxidative stage): step 1/3. In terms of biological role, cytosolic glucose-6-phosphate dehydrogenase that catalyzes the first and rate-limiting step of the oxidative branch within the pentose phosphate pathway/shunt, an alternative route to glycolysis for the dissimilation of carbohydrates and a major source of reducing power and metabolic intermediates for fatty acid and nucleic acid biosynthetic processes. The sequence is that of Glucose-6-phosphate 1-dehydrogenase (G6PD) from Osphranter robustus (Wallaroo).